The following is a 253-amino-acid chain: Adenylate kinase (253 aa).

15–20 (GSGKGT) is a binding site for ATP. Residues 35–64 (SSGDLLRNAVSQNTPLGQEIKSYLDQGKLL) are NMP. AMP contacts are provided by residues S36, R41, 62 to 64 (KLL), 103 to 106 (GFPR), and Q110. The interval 143 to 176 (SRYICPSCQGIYNKQQGFSRCPKCLVELTRRSDD) is LID. Position 144 (R144) interacts with ATP. Zn(2+)-binding residues include C147 and C150. ATP is bound at residue 153-154 (IY). Positions 163 and 166 each coordinate Zn(2+). AMP is bound by residues R173 and R184. A212 lines the ATP pocket.

This sequence belongs to the adenylate kinase family. As to quaternary structure, monomer.

Its subcellular location is the cytoplasm. It catalyses the reaction AMP + ATP = 2 ADP. Its pathway is purine metabolism; AMP biosynthesis via salvage pathway; AMP from ADP: step 1/1. Its function is as follows. Catalyzes the reversible transfer of the terminal phosphate group between ATP and AMP. Plays an important role in cellular energy homeostasis and in adenine nucleotide metabolism. The chain is Adenylate kinase from Chlamydia muridarum (strain MoPn / Nigg).